A 308-amino-acid polypeptide reads, in one-letter code: Ribonuclease HIII (308 aa).

In terms of domain architecture, RNase H type-2 spans 91–308; it reads KNVIGSDEVG…TEKALKMVKK (218 aa). The a divalent metal cation site is built by Asp97, Glu98, and Asp202.

This sequence belongs to the RNase HII family. RnhC subfamily. Mn(2+) serves as cofactor. Requires Mg(2+) as cofactor.

Its subcellular location is the cytoplasm. The catalysed reaction is Endonucleolytic cleavage to 5'-phosphomonoester.. Functionally, endonuclease that specifically degrades the RNA of RNA-DNA hybrids. The polypeptide is Ribonuclease HIII (Listeria monocytogenes serotype 4b (strain F2365)).